Consider the following 267-residue polypeptide: 3-methyl-2-oxobutanoate hydroxymethyltransferase (267 aa).

Residues Asp-46 and Asp-85 each contribute to the Mg(2+) site. 3-methyl-2-oxobutanoate is bound by residues 46-47, Asp-85, and Lys-115; that span reads DS. Position 117 (Glu-117) interacts with Mg(2+). The Proton acceptor role is filled by Glu-184.

The protein belongs to the PanB family. Homodecamer; pentamer of dimers. Mg(2+) is required as a cofactor.

The protein localises to the cytoplasm. The enzyme catalyses 3-methyl-2-oxobutanoate + (6R)-5,10-methylene-5,6,7,8-tetrahydrofolate + H2O = 2-dehydropantoate + (6S)-5,6,7,8-tetrahydrofolate. It participates in cofactor biosynthesis; (R)-pantothenate biosynthesis; (R)-pantoate from 3-methyl-2-oxobutanoate: step 1/2. Catalyzes the reversible reaction in which hydroxymethyl group from 5,10-methylenetetrahydrofolate is transferred onto alpha-ketoisovalerate to form ketopantoate. The protein is 3-methyl-2-oxobutanoate hydroxymethyltransferase of Geobacter sulfurreducens (strain ATCC 51573 / DSM 12127 / PCA).